The chain runs to 326 residues: mRNA decay activator protein ZFP36 (326 aa).

The interval 1–15 is necessary for nuclear export; it reads MDLTAIYESLLSLSP. Residues 1 to 100 are necessary and sufficient for the association with mRNA decay enzymes and mRNA decay activation; sequence MDLTAIYESL…PTSPTATSTT (100 aa). Necessary for localization of ARE-containing mRNAs to processing bodies (PBs) stretches follow at residues 1–174 and 100–326; these read MDLT…DLAA and TPSR…SVSE. The tract at residues 13–66 is disordered; it reads LSPDVPVPSDHGGTESSPGWGSSGPWSLSPSDSSPSGVTSRLPGRSTSLVEGRS. Positions 28 to 49 are enriched in low complexity; that stretch reads SSPGWGSSGPWSLSPSDSSPSG. A Phosphoserine; by MAPKAPK2 modification is found at S60. Position 66 is a phosphoserine (S66). One copy of the P-P-P-P-G repeat lies at 71–75; it reads PPPPG. The disordered stretch occupies residues 78–102; sequence PLAPRLGPELSPSPTSPTATSTTPS. Phosphoserine occurs at positions 88 and 90. Position 92 is a phosphothreonine (T92). Phosphoserine is present on S93. Residues 95 to 168 form a necessary for nuclear localization region; the sequence is TATSTTPSRY…GSRCHFIHNP (74 aa). Residues 97–173 form a necessary for RNA-binding region; sequence TSTTPSRYKT…FIHNPSEDLA (77 aa). 2 consecutive C3H1-type zinc fingers follow at residues 103 to 131 and 141 to 169; these read RYKT…HGLG and KYKT…HNPS. Residues 103–194 are necessary for interaction with PABPN1; sequence RYKTELCRTF…ISFSGLPSGR (92 aa). S169 is subject to Phosphoserine. Residues 174–326 are necessary for mRNA decay activation; sequence APGHPPVLRQ…PIFNRISVSE (153 aa). 2 disordered regions span residues 175-245 and 273-292; these read PGHP…RRDP and SVQS…SSLG. S186 is modified (phosphoserine; by MAPKAPK2). Phosphoserine is present on S197. A P-P-P-P-G repeat occupies 198–202; the sequence is PPPPG. A compositionally biased stretch (low complexity) spans 204-216; it reads AGPSLSSSSFSPS. Residue S218 is modified to Phosphoserine. The P-P-P-P-G repeat unit spans residues 219 to 223; the sequence is PPPPG. S228 carries the post-translational modification Phosphoserine; by MAPK1; in vitro. S276, S296, and S323 each carry phosphoserine. The interaction with CNOT1 stretch occupies residues 312–326; sequence APRRLPIFNRISVSE.

Associates with cytoplasmic CCR4-NOT and PAN2-PAN3 deadenylase complexes to trigger ARE-containing mRNA deadenylation and decay processes. Part of a mRNA decay activation complex at least composed of poly(A)-specific exoribonucleases CNOT6, EXOSC2 and XRN1 and mRNA-decapping enzymes DCP1A and DCP2. Associates with the RNA exosome complex. Interacts (via phosphorylated form) with 14-3-3 proteins; these interactions promote exclusion of ZFP36 from cytoplasmic stress granules in response to arsenite treatment in a MAPKAPK2-dependent manner and does not prevent CCR4-NOT deadenylase complex recruitment or ZFP36-induced ARE-containing mRNA deadenylation and decay processes. Interacts with 14-3-3 proteins; these interactions occur in response to rapamycin in an Akt-dependent manner. Interacts with AGO2 and AGO4. Interacts (via C-terminus) with CNOT1; this interaction occurs in a RNA-independent manner and induces mRNA deadenylation. Interacts (via N-terminus) with CNOT6. Interacts with CNOT6L. Interacts (via C-terminus) with CNOT7; this interaction occurs in a RNA-independent manner, induces mRNA deadenylation and is inhibited in a phosphorylation MAPKAPK2-dependent manner. Interacts (via unphosphorylated form) with CNOT8; this interaction occurs in a RNA-independent manner and is inhibited in a phosphorylation MAPKAPK2-dependent manner. Interacts with DCP1A. Interacts (via N-terminus) with DCP2. Interacts with EDC3. Interacts (via N-terminus) with EXOSC2. Interacts with heat shock 70 kDa proteins. Interacts with KHSRP; this interaction increases upon cytokine-induced treatment. Interacts with MAP3K4; this interaction enhances the association with SH3KBP1/CIN85. Interacts with MAPKAPK2; this interaction occurs upon skeletal muscle satellite cell activation. Interacts with NCL. Interacts with NUP214; this interaction increases upon lipopolysaccharide (LPS) stimulation. Interacts with PABPC1; this interaction occurs in a RNA-dependent manner. Interacts (via hypophosphorylated form) with PABPN1 (via RRM domain and C-terminal arginine-rich region); this interaction occurs in the nucleus in a RNA-independent manner, decreases in presence of single-stranded poly(A) RNA-oligomer and in a p38 MAPK-dependent-manner and inhibits nuclear poly(A) tail synthesis. Interacts with PAN2. Interacts (via C3H1-type zinc finger domains) with PKM. Interacts (via C3H1-type zinc finger domains) with nuclear RNA poly(A) polymerase. Interacts with PPP2CA; this interaction occurs in LPS-stimulated cells and induces ZFP36 dephosphorylation, and hence may promote ARE-containing mRNAs decay. Interacts (via C-terminus) with PRR5L (via C-terminus); this interaction may accelerate ZFP36-mediated mRNA decay during stress. Interacts (via C-terminus) with SFN; this interaction occurs in a phosphorylation-dependent manner. Interacts (via extreme C-terminal region) with SH3KBP1/CIN85 (via SH3 domains); this interaction enhances MAP3K4-induced phosphorylation of ZFP36 at Ser-66 and Ser-93 and does not alter neither ZFP36 binding to ARE-containing transcripts nor TNF-alpha mRNA decay. Interacts with XRN1. Interacts (via C-terminus and Ser-186 phosphorylated form) with YWHAB; this interaction occurs in a p38/MAPKAPK2-dependent manner, increases cytoplasmic localization of ZFP36 and protects ZFP36 from Ser-186 dephosphorylation by serine/threonine phosphatase 2A, and hence may be crucial for stabilizing ARE-containing mRNAs. Interacts (via phosphorylated form) with YWHAE. Interacts (via C-terminus) with YWHAG; this interaction occurs in a phosphorylation-dependent manner. Interacts with YWHAH; this interaction occurs in a phosphorylation-dependent manner. Interacts with YWHAQ; this interaction occurs in a phosphorylation-dependent manner. Interacts with (via C-terminus) YWHAZ; this interaction occurs in a phosphorylation-dependent manner. Interacts (via P-P-P-P-G repeats) with GIGYF2; the interaction is direct. As to quaternary structure, (Microbial infection) Interacts (via C-terminus) with HTLV-1 TAX (via C-terminus); this interaction inhibits HTLV-1 TAX to transactivate viral long terminal repeat (LTR) promoter. Post-translationally, phosphorylated. Phosphorylation at serine and/or threonine residues occurs in a p38 MAPK- and MAPKAPK2-dependent manner. Phosphorylated by MAPKAPK2 at Ser-60 and Ser-186; phosphorylation increases its stability and cytoplasmic localization, promotes binding to 14-3-3 adapter proteins and inhibits the recruitment of cytoplasmic CCR4-NOT and PAN2-PAN3 deadenylase complexes to the mRNA decay machinery, thereby inhibiting ZFP36-induced ARE-containing mRNA deadenylation and decay processes. Phosphorylation by MAPKAPK2 does not impair ARE-containing RNA-binding. Phosphorylated in a MAPKAPK2- and p38 MAPK-dependent manner upon skeletal muscle satellite cell activation; this phosphorylation inhibits ZFP36-mediated mRNA decay activity, and hence stabilizes MYOD1 mRNA. Phosphorylated by MAPK1 upon mitogen stimulation. Phosphorylated at Ser-66 and Ser-93; these phosphorylations increase in a SH3KBP1-dependent manner. Phosphorylated at serine and threonine residues in a pyruvate kinase PKM- and p38 MAPK-dependent manner. Phosphorylation at Ser-60 may participate in the PKM-mediated degradation of ZFP36 in a p38 MAPK-dependent manner. Dephosphorylated by serine/threonine phosphatase 2A at Ser-186. In terms of processing, ubiquitinated; pyruvate kinase (PKM)-dependent ubiquitination leads to proteasomal degradation through a p38 MAPK signaling pathway. As to expression, expressed in both basal and suprabasal epidermal layers. Expressed in epidermal keratinocytes. Expressed strongly in mature dendritic cells. Expressed in immature dendritic cells (at protein level).

It is found in the nucleus. The protein localises to the cytoplasm. Its subcellular location is the cytoplasmic granule. The protein resides in the P-body. Its function is as follows. Zinc-finger RNA-binding protein that destabilizes several cytoplasmic AU-rich element (ARE)-containing mRNA transcripts by promoting their poly(A) tail removal or deadenylation, and hence provide a mechanism for attenuating protein synthesis. Acts as an 3'-untranslated region (UTR) ARE mRNA-binding adapter protein to communicate signaling events to the mRNA decay machinery. Recruits deadenylase CNOT7 (and probably the CCR4-NOT complex) via association with CNOT1, and hence promotes ARE-mediated mRNA deadenylation. Functions also by recruiting components of the cytoplasmic RNA decay machinery to the bound ARE-containing mRNAs. Self regulates by destabilizing its own mRNA. Binds to 3'-UTR ARE of numerous mRNAs and of its own mRNA. Plays a role in anti-inflammatory responses; suppresses tumor necrosis factor (TNF)-alpha production by stimulating ARE-mediated TNF-alpha mRNA decay and several other inflammatory ARE-containing mRNAs in interferon (IFN)- and/or lipopolysaccharide (LPS)-induced macrophages. Also plays a role in the regulation of dendritic cell maturation at the post-transcriptional level, and hence operates as part of a negative feedback loop to limit the inflammatory response. Promotes ARE-mediated mRNA decay of hypoxia-inducible factor HIF1A mRNA during the response of endothelial cells to hypoxia. Positively regulates early adipogenesis of preadipocytes by promoting ARE-mediated mRNA decay of immediate early genes (IEGs). Negatively regulates hematopoietic/erythroid cell differentiation by promoting ARE-mediated mRNA decay of the transcription factor STAT5B mRNA. Plays a role in maintaining skeletal muscle satellite cell quiescence by promoting ARE-mediated mRNA decay of the myogenic determination factor MYOD1 mRNA. Associates also with and regulates the expression of non-ARE-containing target mRNAs at the post-transcriptional level, such as MHC class I mRNAs. Participates in association with argonaute RISC catalytic components in the ARE-mediated mRNA decay mechanism; assists microRNA (miRNA) targeting ARE-containing mRNAs. May also play a role in the regulation of cytoplasmic mRNA decapping; enhances decapping of ARE-containing RNAs, in vitro. Involved in the delivery of target ARE-mRNAs to processing bodies (PBs). In addition to its cytosolic mRNA-decay function, affects nuclear pre-mRNA processing. Negatively regulates nuclear poly(A)-binding protein PABPN1-stimulated polyadenylation activity on ARE-containing pre-mRNA during LPS-stimulated macrophages. Also involved in the regulation of stress granule (SG) and P-body (PB) formation and fusion. Plays a role in the regulation of keratinocyte proliferation, differentiation and apoptosis. Plays a role as a tumor suppressor by inhibiting cell proliferation in breast cancer cells. Functionally, (Microbial infection) Negatively regulates HTLV-1 TAX-dependent transactivation of viral long terminal repeat (LTR) promoter. This Homo sapiens (Human) protein is mRNA decay activator protein ZFP36.